Reading from the N-terminus, the 529-residue chain is Delayed-rectifier potassium channel regulatory subunit KCNS1 (529 aa).

At 1 to 217 (MLMLLVRGTR…LTMENPGYSL (217 aa)) the chain is on the cytoplasmic side. Residues 218–239 (PSKLFSCVSISVVLASIAAMCI) traverse the membrane as a helical segment. Residues 240–270 (HSLPEYQAREAAAAVAAVAAGRSAEGVRDDP) lie on the Extracellular side of the membrane. A helical transmembrane segment spans residues 271 to 293 (VLRRLEYFCIAWFSFEVSSRLLL). At 294–304 (APSTRNFFCHP) the chain is on the cytoplasmic side. The chain crosses the membrane as a helical span at residues 305 to 322 (LNLIDIVSVLPFYLTLLA). The Extracellular segment spans residues 323–340 (GAALGDHGGTGGKEFGHL). A helical; Voltage-sensor membrane pass occupies residues 341 to 361 (GKVVQVFRLMRIFRVLKLARH). Over 362 to 376 (STGLRSLGATLKHSY) the chain is Cytoplasmic. A helical membrane pass occupies residues 377–398 (REVGILLLYLAVGVSVFSGVAY). Over 399-411 (TAEKEEHVGFDTI) the chain is Extracellular. Positions 412-423 (PACWWWGTVSMT) form an intramembrane region, helical. A Selectivity filter motif is present at residues 424-429 (TVGYGD). An intramembrane segment occupies 424-431 (TVGYGDVV). Residues 432-438 (PVTVAGK) lie on the Extracellular side of the membrane. A helical membrane pass occupies residues 439–467 (LAASGCILGGILVVALPITIIFNKFSHFY). The Cytoplasmic portion of the chain corresponds to 468–529 (RRQKALEAAV…PSEPPHSQMY (62 aa)). The interval 494-529 (GVSEASLETSRETSQEGRSADLETQVPSEPPHSQMY) is disordered. Positions 502 to 514 (TSRETSQEGRSAD) are enriched in basic and acidic residues.

This sequence belongs to the potassium channel family. S (TC 1.A.1.2) subfamily. Kv9.1/KCNS1 sub-subfamily. In terms of assembly, heterotetramer with KCNB1. Heterotetramer with KCNB2. Does not form homomultimers.

It localises to the cell membrane. Its function is as follows. Potassium channel regulatory subunit that modulate the delayed rectifier voltage-gated potassium channel activity of KCNB1 and KCNB2 by altering their kinetics, expression levels, and shifting the half-inactivation potential to more polarized values. While it does not form functional channels on its own, it can form functional heterotetrameric channels with KCNB1 and KCNB2. Each regulatory subunit has unique regulatory properties that can lead to extensive inhibition, significant changes in kinetics, and/or substantial shifts in the voltage dependencies of the inactivation process. The protein is Delayed-rectifier potassium channel regulatory subunit KCNS1 of Aotus nancymaae (Ma's night monkey).